A 251-amino-acid chain; its full sequence is MyoD family inhibitor (251 aa).

Disordered stretches follow at residues 1 to 64 (MSQV…PHDS), 84 to 167 (VTCQ…APAV), and 230 to 251 (RPKQ…GKEF). The segment covering 84-94 (VTCQPQGNPQG) has biased composition (polar residues). A compositionally biased stretch (low complexity) spans 138-154 (GSQAGRKSRGSARSASQ).

The protein belongs to the MDFI family. Interacts (via C-terminus) with AXIN1 and LEF1. Interacts with CCNT2. Interacts (via C-terminus) with Piezo channel composed of PIEZO1 or PIEZO2; the interaction prolongs Piezo channel inactivation. In terms of tissue distribution, in the embryo, highly expressed in the sclerotome. Also expressed in the notochord, neural tube, limb buds, heart, branchial arches and head mesenchyme. In the adult, highly expressed in skeletal muscle. Expressed at lower levels in most other tissues.

The protein localises to the nucleus. It localises to the cytoplasm. In terms of biological role, inhibits the transactivation activity of the Myod family of myogenic factors and represses myogenesis. Acts by associating with Myod family members and retaining them in the cytoplasm by masking their nuclear localization signals. Can also interfere with the DNA-binding activity of Myod family members. Plays an important role in trophoblast and chondrogenic differentiation. Regulates the transcriptional activity of TCF7L1/TCF3 by interacting directly with Tcf7l1/Tcf3 and preventing it from binding DNA. Binds to the axin complex, resulting in an increase in the level of free beta-catenin. Affects axin regulation of the WNT and JNK signaling pathways. Regulates the activity of mechanosensitive Piezo channel. This is MyoD family inhibitor (Mdfi) from Mus musculus (Mouse).